The chain runs to 2705 residues: MEQMDCKPYQPLSKVKHEVDLTYTSSSDESEDGRKQRQSYDSRETLNEYSQELRLNYNSQSRKRKNTDQSTQDMEFCETPHILCSGYQTDLHGVSEHSYPLEVGSDVDTETEGGASPDHALRMWMRGMKSEHSSCLSSRANSALSLTDTDHERKSDGENDMPGSPHNQFTFRPLPPPPPPPHACTCTRKPPPAADSLQRRSMTTRSQPSPAAPTPPTSTQDSVHLHNSWVLNSNIPLETRHFLFKHGSGSSAIFSAASQNYPLTSNTVYSPPPRPLPRNTFSRPAFTFSKPYRCCNWKCTALSATAITVTLALLLAYVIAVHLFGLTWQLQPVEGQLYENGVSKGNKGAESTDTTYSPIGGKVSDKTEKKVFQKGRAIDTGEVEIGAQVMQTIPPGLFWRFQITIHHPVYLKFNISLAKDSLLGIYGRRNIPPTHTQFDFVKLMDGKQLIKQEPKNSEEPQQAPRNLILTSLQETGFIEYMDQGAWHMAFYNDGKKVEQVFVLTTAIEVLDDCSTNCNGNGECISGHCHCFPGFLGPDCAKDSCPVLCSGNGEYEKGHCVCRNGWKGPECDVPEEQCIDPTCFGHGTCIMGVCICVPGYKGEICEEEDCLDPMCSGHGVCVQGECHCSAGWGGVNCETSLPICQEHCSGHGTFLLDVGLCSCEPQWTGSDCSTELCTLDCGSHGVCSRGICQCEEGWVGPTCEERTCHSHCAEHGQCKDGKCECSPGWEGDHCTIDGCPGLCYGNGRCTLDQNGWHCVCQVGWSGSGCNVVMEMACGDNLDNDGDGLTDCVDPDCCQQNNCYASPLCQGSPDPLDLIQHSQPPFSQHPPRLFYDRIRFLIGKESTHVIPGDISFESRRASVIRGQVVAIDGTPLVGVNVSFLHHDEYGYTISRQDGSFDLVAVGGISVTLVFDRSPFISEKRTLWLSWNRFVIVDKVVMQRAESDIPSCDVSSFISPNPIVLPSPLTAFGGSCPERGTVIPELQVVQEEIPIPSSFVKLSYLSSRTPGYKTLLRVILTHTTIPSGMTKVHLIIAVEGRLLQKWFPAAANLVYTFAWNKTDIYGQKVSGLAEAMVSVGYEYETCPDFILWEKRTVILQGFEMDASNLGGWSINKHHVLNPQSGIVHKGNGENMFISQQPPVISTMMGNGHQRSVSCSNCNGLALNSKLFAPVALTSGPDGSVYIGDFNFVRRIFPSGNSIGILELRNRDTRHSTSPAHKYYLAVDPVSESLYLSDTNTRRVYKAKSLIETKDLAKNVDVVAGTGDQCLPFDQSHCGDGGKASEASLNSPRGITIDKHGFIYFVDGTMIRKIDENGMITTIIGSNGLTSTQPLSCDSGMDITQVRLEWPTDLTVNPLDNSLYVLDNNIVLQISESRRVRIIAGRPIHCQVPGIDHFIVSKVAIHSTLESARAIAVSHSGIPYIRETDERKINRIQQVTTNGEISIIAGAPSDCDCKIDPNCDCFSGDGGYAKDAKLKAPSSLAVSPDDTLYVADLGNIRIRAVSRNKAHLSDTNMYEIASPADQELYQFTINGTHLHTLNLITRDYIYNFTYSGEGDVATITSSNGNSVHIRRDTSGLPLWVVVPGGQVYWLTISSNGVLKRVYAQGYNLALMTYPGNTGLLATKSDENGWTTVYEYDSDGHLTNATFPTGEVSSFHSDVEKLTRVELDTSNRENMVTATNFSATSTIYTLKQDNTQNIYRVSPDGSLRVTFASGMEITLNTEPHILAGVVSPTLGKCNISLPGEHNSNLIEWRQRREQTKGNISTFERRLRAHNRNLLSIDFDHVTRTGKIYDDHRKFTLRIMYDQTGRPVLWSPISKYNEVNITYSHSGLVTYIQRGTWTEKMEYDPSGNIISRTWADGKIWSYTYLEKSVMLLLHSQRRYIFEYDQSDYLLSVTMPSMVRHALQTMLSVGYYRNIYTPPDSGAAFIQDVTRDGRLLQTLYPGTGRRVLYKYSKQSRLSEILYDTTQVTFTYEESSGVIKTIHLMHDGFICTIRYRQTGPLIGRQIFRFSEEGLVNARFDYSYNNFRVTSMQAMINETPLPIDLYRYVDVSGRTEQFGKFSVINYDLNQVITTTVMKHTKIFSANGQVIEVQYEILKSIAYWMTIQYDNMGRMVICDIRVGVDANITRYFYEYDRDGQLQTVSVNDKTQWRYSYDLNGNINLLSHGNSARLTPLRYDLRDRITRLGEIQYKMDEDGFLRQRGNEIFEYNSNGLLNKAYNKVSGWTVQYCYDGLGRRVASKSSLGQHLQFFYADLSNPIRVTHLYNHSSSEITSLYYDLQGHLIAMELSSGEEYYVACDNTGTPLAVFSSRGQVIKEILYTPYGEIYQDTNPDFQVVIGFHGGLYDSLTKLVHLGQRDYDVIAGRWTTPNHHIWKHLNAVPQPFNLYSFENNYPVGRIQDVAKYTTDIGSWLELFGFQLHNVLPGFPKPEIEALETTYELLQLQTKTQEWDPGKTILGIQCELQKQLRNFISLDQLPMTPRYSDGKCYEGVKQPRFAAIPSVFGKGIKFAIKDGIVTADIIGVANEDSRRIAAILNNAHYLENLHFTIEGRDTHYFIKLGSLEEDLSLIGNTGGRRILENGVNVTVSQMTSVINGRTRRFADIQLQHGALCFNVRYGTTVEEEKNHVLEVARQRAVAQAWTKEQRRLQEGEEGIRAWTDGEKQQLLNTGRVQGYDGYFVLSVEQYLELSDSANNIHFMRQSEIGRR.

Disordered stretches follow at residues 1–73 (MEQM…STQD) and 135–222 (CLSS…TQDS). The 299-residue stretch at 1 to 299 (MEQMDCKPYQ…KPYRCCNWKC (299 aa)) folds into the Teneurin N-terminal domain. Topologically, residues 1-305 (MEQMDCKPYQ…NWKCTALSAT (305 aa)) are cytoplasmic. Over residues 32–46 (DGRKQRQSYDSRETL) the composition is skewed to basic and acidic residues. Positions 62-65 (RKRK) match the Nuclear localization signal (NLS) motif. Polar residues predominate over residues 135–147 (CLSSRANSALSLT). Positions 148–157 (DTDHERKSDG) are enriched in basic and acidic residues. Over residues 173-182 (PLPPPPPPPH) the composition is skewed to pro residues. The Required for interaction with SORBS1 (Ten-1 ICD form) motif lies at 271–278 (PPPRPLPR). A helical membrane pass occupies residues 306–326 (AITVTLALLLAYVIAVHLFGL). Over 327–2705 (TWQLQPVEGQ…FMRQSEIGRR (2379 aa)) the chain is Extracellular. Residue Asn414 is glycosylated (N-linked (GlcNAc...) asparagine). EGF-like domains are found at residues 509–540 (VLDD…PDCA), 541–572 (KDSC…ECDV), 573–605 (PEEQ…EICE), 606–638 (EEDC…NCET), 639–672 (SLPI…SDCS), 673–702 (TELC…GPTC), 703–734 (EERT…DHCT), and 735–769 (IDGC…SGCN). 22 disulfides stabilise this stretch: Cys513-Cys523, Cys517-Cys528, Cys530-Cys539, Cys548-Cys559, Cys561-Cys570, Cys577-Cys588, Cys582-Cys593, Cys595-Cys604, Cys609-Cys620, Cys614-Cys625, Cys627-Cys636, Cys647-Cys660, Cys662-Cys671, Cys676-Cys686, Cys680-Cys691, Cys693-Cys702, Cys707-Cys717, Cys711-Cys722, Cys724-Cys733, Cys738-Cys748, Cys742-Cys757, and Cys759-Cys768. N-linked (GlcNAc...) asparagine glycosylation is found at Asn878 and Asn1057. 5 NHL repeats span residues 1167–1192 (LFAP…VRRI), 1202–1246 (LELR…AKSL), 1272–1316 (SHCG…NGMI), 1331–1382 (LSCD…IAGR), and 1461–1504 (CFSG…VSRN). A YD 1 repeat occupies 1514–1533 (YEIASPADQELYQFTINGTH). Asn1530 and Asn1547 each carry an N-linked (GlcNAc...) asparagine glycan. YD repeat units lie at residues 1550–1570 (YSGE…VHIR), 1588–1612 (YWLT…ALMT), 1613–1634 (YPGN…TVYE), and 1635–1655 (YDSD…SSFH). Residues Asn1643, Asn1679, Asn1737, Asn1761, and Asn1822 are each glycosylated (N-linked (GlcNAc...) asparagine). 11 YD repeats span residues 1825–1844 (YSHS…EKME), 1845–1865 (YDPS…WSYT), 1866–1884 (YLEK…YIFE), 1885–1905 (YDQS…HALQ), 1913–1929 (YRNI…FIQD), 1930–1949 (VTRD…RRVL), 1950–1969 (YKYS…TQVT), 1972–1992 (YEES…FICT), 1995–2015 (YRQT…EGLV), 2065–2085 (YDLN…FSAN), and 2093–2113 (YEIL…MGRM). A glycan (N-linked (GlcNAc...) asparagine) is linked at Asn2125. YD repeat units follow at residues 2133–2153 (YDRD…WRYS), 2154–2174 (YDLN…LTPL), 2176–2196 (YDLR…DEDG), 2208–2228 (YNSN…TVQY), and 2230–2250 (YDGL…LQFF). N-linked (GlcNAc...) asparagine glycosylation is present at Asn2265. 2 YD repeats span residues 2276-2293 (YDLQ…GEEY) and 2294-2317 (YVAC…IKEI). Asn2582 is a glycosylation site (N-linked (GlcNAc...) asparagine).

Belongs to the tenascin family. Teneurin subfamily. Homodimer; disulfide-linked. Heterodimer with other teneurins. Ten-1 ICD interacts with SORBS1 (via third SH3 domain). Interacts with MBD1 isoform 2. In terms of processing, derives from the plasma membrane form by proteolytic processing. Further proteolytic cleavage may be generated. Derives from the plasma membrane form by proteolytic cleavage and translocates to the nucleus. In terms of tissue distribution, expressed in the neurons of the developing visual system and in fetal brain.

The protein resides in the cell membrane. Its subcellular location is the nucleus. It localises to the nucleus speckle. It is found in the nucleus matrix. The protein localises to the cytoplasm. The protein resides in the cytoskeleton. Its function is as follows. Involved in neural development, regulating the establishment of proper connectivity within the nervous system. May function as a cellular signal transducer. Plays a role in the regulation of neuroplasticity in the limbic system. Mediates a rapid reorganization of actin- and tubulin-based cytoskeleton elements with an increase in dendritic arborization and spine density formation of neurons in the hippocampus and amygdala. Induces BDNF transcription inhibition in neurons. Activates the mitogen-activated protein (MAP) kinase 2 (MEK2) and extracellular signal-regulated kinase (ERK) cascade. Functionally, induces gene transcription activation. The chain is Teneurin-1 (TENM1) from Gallus gallus (Chicken).